The primary structure comprises 375 residues: Platelet-derived growth factor receptor-like protein (375 aa).

The N-terminal stretch at 1–21 is a signal peptide; it reads MKFWLLLGLLLLHEALEDVAG. Positions 20 to 63 are disordered; it reads AGQHSPKNKRPKEQGENRIKPTNKKAKPKIPKVKDRDSTDSTAK. The segment covering 40–50 has biased composition (basic residues); it reads PTNKKAKPKIP. An Ig-like C2-type 1 domain is found at 47-159; it reads PKIPKVKDRD…GYICRRDEAK (113 aa). A disulfide bond links cysteine 96 and cysteine 143. Asparagine 219 is a glycosylation site (N-linked (GlcNAc...) asparagine). The Ig-like C2-type 2 domain occupies 272–375; it reads PSTTILASSN…TTVATTVEFS (104 aa). Residues cysteine 293 and cysteine 357 are joined by a disulfide bond.

As to quaternary structure, forms a complex composed of PDGFRL, TNK2 and GRB2.

It is found in the secreted. In Mus musculus (Mouse), this protein is Platelet-derived growth factor receptor-like protein (Pdgfrl).